A 322-amino-acid polypeptide reads, in one-letter code: Probable heme-iron transport system permease protein IsdF (322 aa).

The next 9 membrane-spanning stretches (helical) occupy residues 9-29 (LLFL…FVTG), 61-81 (ILIA…LQAA), 89-109 (ANII…MLFI), 114-134 (FYLP…IILL), 143-163 (VSMI…LEIL), 179-199 (IWSD…LTLL), 233-253 (VFLA…GIIV), 267-287 (VLIP…DLLG), and 294-314 (LEIP…IYLI).

It belongs to the binding-protein-dependent transport system permease family. FecCD subfamily.

Its subcellular location is the cell membrane. Functionally, part of the binding-protein-dependent transport system for heme-iron. Responsible for the translocation of the substrate across the membrane. This chain is Probable heme-iron transport system permease protein IsdF (isdF), found in Staphylococcus aureus (strain Mu3 / ATCC 700698).